The sequence spans 222 residues: Glutathione-specific gamma-glutamylcyclotransferase 1 (222 aa).

The span at 1–22 (MKQESAAPNTPPTSQSPTPSAQ) shows a compositional bias: low complexity. The segment at 1 to 24 (MKQESAAPNTPPTSQSPTPSAQFP) is disordered. Residue 35–40 (IFGYGS) participates in substrate binding. Glutamate 115 (proton acceptor) is an active-site residue.

It belongs to the gamma-glutamylcyclotransferase family. ChaC subfamily. As to quaternary structure, interacts with NOTCH1 (via extracellular region).

Its subcellular location is the cytoplasm. It is found in the cytosol. The protein resides in the golgi apparatus. The protein localises to the trans-Golgi network. It catalyses the reaction glutathione = L-cysteinylglycine + 5-oxo-L-proline. Catalyzes the cleavage of glutathione into 5-oxo-L-proline and a Cys-Gly dipeptide. Acts specifically on glutathione, but not on other gamma-glutamyl peptides. Glutathione depletion is an important factor for apoptosis initiation and execution. Acts as a pro-apoptotic component of the unfolded protein response pathway by mediating the pro-apoptotic effects of the ATF4-ATF3-DDIT3/CHOP cascade. Negative regulator of Notch signaling pathway involved in embryonic neurogenesis: acts by inhibiting Notch cleavage by furin, maintaining Notch in an immature inactive form, thereby promoting neurogenesis in embryos. In Homo sapiens (Human), this protein is Glutathione-specific gamma-glutamylcyclotransferase 1.